A 558-amino-acid chain; its full sequence is Ceramide kinase-like protein (558 aa).

Positions Met-1–Pro-36 are disordered. 2 short sequence motifs (nuclear localization signal) span residues Pro-2–Arg-9 and Lys-102–Arg-106. Residues Asn-164–Gly-339 enclose the DAGKc domain.

In terms of processing, phosphorylated on serine residues. In terms of tissue distribution, isoform 1 and isoform 2 are expressed in adult retina, liver and pancreas as well as in fetal brain, lung and kidney. Isoform 3 is expressed in adult retina as well as in fetal lung and liver. Isoform 4 is expressed in adult retina, lung and kidney as well as in fetal lung and liver. Moderately expressed in retina, kidney, lung, testis, trachea, and pancreas. Weakly expressed in brain, placenta and liver.

It is found in the cytoplasm. The protein localises to the nucleus. It localises to the nucleolus. The protein resides in the golgi apparatus. Its subcellular location is the trans-Golgi network. It is found in the endoplasmic reticulum. In terms of biological role, has no detectable ceramide-kinase activity. Overexpression of CERKL protects cells from apoptosis in oxidative stress conditions. The chain is Ceramide kinase-like protein (CERKL) from Homo sapiens (Human).